Consider the following 1072-residue polypeptide: Carbamoyl phosphate synthase large chain (1072 aa).

The carboxyphosphate synthetic domain stretch occupies residues 1-401 (MPKRLDINTI…SLLKAVRSLE (401 aa)). ATP is bound by residues Arg129, Arg169, Gly175, Gly176, Lys208, Ile210, Glu215, Gly241, Val242, His243, Gln284, and Glu298. The 195-residue stretch at 133–327 (RTLMQDLNEP…IAKLAAKIAV (195 aa)) folds into the ATP-grasp 1 domain. 3 residues coordinate Mg(2+): Gln284, Glu298, and Asn300. Residues Gln284, Glu298, and Asn300 each coordinate Mn(2+). Residues 402–546 (LGIYHLELDH…YSTYADENES (145 aa)) form an oligomerization domain region. The segment at 547-929 (IVTDRKSVVV…ALYKGLVASG (383 aa)) is carbamoyl phosphate synthetic domain. The ATP-grasp 2 domain maps to 671–861 (EAALTKLGIP…MANVATKVIL (191 aa)). 9 residues coordinate ATP: Arg707, Arg746, Glu752, Gly777, Val778, His779, Ser780, Gln820, and Glu832. Gln820, Glu832, and Asn834 together coordinate Mg(2+). Residues Gln820, Glu832, and Asn834 each contribute to the Mn(2+) site. An MGS-like domain is found at 930-1072 (INIPTHGSVI…QTKRHEVVHA (143 aa)). The interval 930–1072 (INIPTHGSVI…QTKRHEVVHA (143 aa)) is allosteric domain.

This sequence belongs to the CarB family. As to quaternary structure, composed of two chains; the small (or glutamine) chain promotes the hydrolysis of glutamine to ammonia, which is used by the large (or ammonia) chain to synthesize carbamoyl phosphate. Tetramer of heterodimers (alpha,beta)4. The cofactor is Mg(2+). Mn(2+) serves as cofactor.

It catalyses the reaction hydrogencarbonate + L-glutamine + 2 ATP + H2O = carbamoyl phosphate + L-glutamate + 2 ADP + phosphate + 2 H(+). It carries out the reaction hydrogencarbonate + NH4(+) + 2 ATP = carbamoyl phosphate + 2 ADP + phosphate + 2 H(+). The protein operates within amino-acid biosynthesis; L-arginine biosynthesis; carbamoyl phosphate from bicarbonate: step 1/1. Its pathway is pyrimidine metabolism; UMP biosynthesis via de novo pathway; (S)-dihydroorotate from bicarbonate: step 1/3. In terms of biological role, large subunit of the glutamine-dependent carbamoyl phosphate synthetase (CPSase). CPSase catalyzes the formation of carbamoyl phosphate from the ammonia moiety of glutamine, carbonate, and phosphate donated by ATP, constituting the first step of 2 biosynthetic pathways, one leading to arginine and/or urea and the other to pyrimidine nucleotides. The large subunit (synthetase) binds the substrates ammonia (free or transferred from glutamine from the small subunit), hydrogencarbonate and ATP and carries out an ATP-coupled ligase reaction, activating hydrogencarbonate by forming carboxy phosphate which reacts with ammonia to form carbamoyl phosphate. The polypeptide is Carbamoyl phosphate synthase large chain (Bacillus cereus (strain AH187)).